We begin with the raw amino-acid sequence, 371 residues long: Cytochrome b (371 aa).

4 helical membrane-spanning segments follow: residues Phe25–Ile45, Trp69–Ile90, Trp105–Leu125, and Phe170–Ile190. Heme b-binding residues include His75 and His89. Heme b contacts are provided by His174 and His188. A ubiquinone is bound at residue His193. Helical transmembrane passes span Tyr218 to Ser238, Leu280 to His300, Leu312 to Thr332, and Phe339 to Pro358.

The protein belongs to the cytochrome b family. As to quaternary structure, the cytochrome bc1 complex contains 3 respiratory subunits (MT-CYB, CYC1 and UQCRFS1), 2 core proteins (UQCRC1 and UQCRC2) and probably 6 low-molecular weight proteins. Heme b serves as cofactor.

Its subcellular location is the mitochondrion inner membrane. Component of the ubiquinol-cytochrome c reductase complex (complex III or cytochrome b-c1 complex) that is part of the mitochondrial respiratory chain. The b-c1 complex mediates electron transfer from ubiquinol to cytochrome c. Contributes to the generation of a proton gradient across the mitochondrial membrane that is then used for ATP synthesis. The sequence is that of Cytochrome b (MT-CYB) from Micrurus fulvius (Eastern coral snake).